The chain runs to 362 residues: sn-glycerol-3-phosphate import ATP-binding protein UgpC (362 aa).

One can recognise an ABC transporter domain in the interval 4 to 235 (LSFRNVKKTY…PASTFVAGFI (232 aa)). Residue 37 to 44 (GPSGCGKS) coordinates ATP.

It belongs to the ABC transporter superfamily. sn-glycerol-3-phosphate importer (TC 3.A.1.1.3) family. The complex is composed of two ATP-binding proteins (UgpC), two transmembrane proteins (UgpA and UgpE) and a solute-binding protein (UgpB).

It is found in the cell inner membrane. It catalyses the reaction sn-glycerol 3-phosphate(out) + ATP + H2O = sn-glycerol 3-phosphate(in) + ADP + phosphate + H(+). Functionally, part of the ABC transporter complex UgpBAEC involved in sn-glycerol-3-phosphate (G3P) import. Responsible for energy coupling to the transport system. The protein is sn-glycerol-3-phosphate import ATP-binding protein UgpC of Bordetella parapertussis (strain 12822 / ATCC BAA-587 / NCTC 13253).